The sequence spans 703 residues: Methionine--tRNA ligase (703 aa).

The 'HIGH' region signature appears at 15-25 (PYANGPVHLGH). Positions 147, 150, 160, and 163 each coordinate Zn(2+). Positions 345–349 (KFSKS) match the 'KMSKS' region motif. Lysine 348 provides a ligand contact to ATP. Residues 602 to 703 (DFQKIDLRVA…GEGINGNSVS (102 aa)) form the tRNA-binding domain.

This sequence belongs to the class-I aminoacyl-tRNA synthetase family. MetG type 1 subfamily. Homodimer. It depends on Zn(2+) as a cofactor.

Its subcellular location is the cytoplasm. The enzyme catalyses tRNA(Met) + L-methionine + ATP = L-methionyl-tRNA(Met) + AMP + diphosphate. Is required not only for elongation of protein synthesis but also for the initiation of all mRNA translation through initiator tRNA(fMet) aminoacylation. In Chlorobaculum tepidum (strain ATCC 49652 / DSM 12025 / NBRC 103806 / TLS) (Chlorobium tepidum), this protein is Methionine--tRNA ligase.